The sequence spans 590 residues: FAD-linked oxidoreductase malF (590 aa).

The N-terminal stretch at 1 to 18 is a signal peptide; sequence MKYTATFALLILAIGIQT. Residues Asn44, Asn80, Asn103, Asn178, and Asn396 are each glycosylated (N-linked (GlcNAc...) asparagine). In terms of domain architecture, FAD-binding PCMH-type spans 117-303; the sequence is AQGRIPLYSA…TSVTLRAFAD (187 aa).

The protein belongs to the oxygen-dependent FAD-linked oxidoreductase family. The cofactor is FAD.

FAD-linked oxidoreductase; part of the gene cluster that mediates the biosynthesis of malbrancheamide, a dichlorinated fungal indole alkaloid that belongs to a family of natural products containing a characteristic bicyclo[2.2.2]diazaoctane core. The first step of malbrancheamide biosynthesis involves coupling of L-proline and L-tryptophan by malG, a bimodular NRPS, to produce L-Pro-L-Trp aldehyde through reductive offloading. This compound undergoes spontaneous cyclization and dehydration to give a dienamine which is reverse prenylated at C-2 by malE. The other prenyltransferase present in the cluster, malB, displays modest activity, suggesting that may be a redundant gene in the pathway. Subsequently, a [4+2] Diels-Alder cyclo-addition catalyzed by the bifunctional enzyme malC forms the characteristic bicyclo[2.2.2]diazaoctane ring of premalbrancheamid. Finally, the flavin-dependent halogenase malA catalyzes the iterative dichlorination of the indole ring of premalbrancheamide to yield C-9 monochlorinated malbrancheamide B, C-8 monochlorinated isomalbrancheamide B, and dichlorinated malbrancheamide. MalA is also able to brominate premalbrancheamide at C-9 to yield malbrancheamide C, and, to a lesser extend, at C-8 to yield isomalbrancheamide C. Finally, malA can brominate C-9 monochlorinated malbrancheamide B at C-8 to yield malbrancheamide D, or C-8 monochlorinated isomalbrancheamide B at C-9 to produce isomalbrancheamide D. The polypeptide is FAD-linked oxidoreductase malF (Malbranchea aurantiaca).